The following is a 285-amino-acid chain: Bifunctional protein FolD (285 aa).

NADP(+) is bound by residues 165-167 (GRS) and Ser-190.

It belongs to the tetrahydrofolate dehydrogenase/cyclohydrolase family. As to quaternary structure, homodimer.

The catalysed reaction is (6R)-5,10-methylene-5,6,7,8-tetrahydrofolate + NADP(+) = (6R)-5,10-methenyltetrahydrofolate + NADPH. It catalyses the reaction (6R)-5,10-methenyltetrahydrofolate + H2O = (6R)-10-formyltetrahydrofolate + H(+). It functions in the pathway one-carbon metabolism; tetrahydrofolate interconversion. Its function is as follows. Catalyzes the oxidation of 5,10-methylenetetrahydrofolate to 5,10-methenyltetrahydrofolate and then the hydrolysis of 5,10-methenyltetrahydrofolate to 10-formyltetrahydrofolate. In Burkholderia mallei (strain NCTC 10247), this protein is Bifunctional protein FolD.